The primary structure comprises 244 residues: MRNIKLIIEFDGTNFCGWQRQVKDRTVQGCLENAILKITGEKSLTNGSSRTDGGVHAKAMVANFITNSSIPGEKFREALNTKLPDDISIIKSEEVDMEFHARYSSKGKMYSYTIVNRYEKLAFGKQYLHHVRKELNVEDMKKACEYFLGKHDFKAFMSPGSSAKTTVRTITDFYIEENKNVIRIFISADGFLYNMVRIIVGTLINVGTGKTKLQDVNNIINDGIRKNAGMCVPPNGLVLEKVFY.

Asp-52 serves as the catalytic Nucleophile. Tyr-110 contacts substrate.

The protein belongs to the tRNA pseudouridine synthase TruA family. As to quaternary structure, homodimer.

The enzyme catalyses uridine(38/39/40) in tRNA = pseudouridine(38/39/40) in tRNA. Functionally, formation of pseudouridine at positions 38, 39 and 40 in the anticodon stem and loop of transfer RNAs. The chain is tRNA pseudouridine synthase A from Clostridium botulinum (strain Alaska E43 / Type E3).